The chain runs to 973 residues: DENN domain-containing protein C297.05 (973 aa).

The span at 69–79 (AHHNTTGSNSV) shows a compositional bias: polar residues. The interval 69–136 (AHHNTTGSNS…YHSRKPYSEP (68 aa)) is disordered. Ser134 and Ser318 each carry phosphoserine. The region spanning 169–427 (ALPLFAATHP…NICCDVPLPP (259 aa)) is the uDENN domain. Residues 449–586 (VNEIPGWNDV…LRSKLQAHLK (138 aa)) form the cDENN domain. The region spanning 588–919 (AAPLHDKFYV…DRCELDLNDP (332 aa)) is the dDENN domain. Residues 693–713 (RNFSSPPFTRPASPSSSKFRF) are disordered. At Ser726 the chain carries Phosphoserine. Positions 729–750 (SPYSVPELRSSESNQNKAGSIN) are disordered. Residues 739 to 750 (SESNQNKAGSIN) are compositionally biased toward polar residues.

The protein localises to the cytoplasm. It localises to the nucleus. In Schizosaccharomyces pombe (strain 972 / ATCC 24843) (Fission yeast), this protein is DENN domain-containing protein C297.05.